Reading from the N-terminus, the 1179-residue chain is Tubulin glycylase 3B (1179 aa).

Over residues 177–199 (NKGQTNNSNRENGGNFHSEQSPK) the composition is skewed to polar residues. Disordered stretches follow at residues 177–208 (NKGQ…VVSG), 250–278 (QQPQ…LPLS), 592–625 (KVLS…AVQQ), and 853–890 (QKQH…LKQD). The span at 592–601 (KVLSNTKSKD) shows a compositional bias: basic and acidic residues. 2 stretches are compositionally biased toward polar residues: residues 614–625 (KSKSNNQNAVQQ) and 881–890 (AQSSTSLKQD). In terms of domain architecture, TTL spans 790 to 1152 (FIDFYETVDF…SMAKKGTKKN (363 aa)). ATP contacts are provided by residues 965–968 (QKYI), Lys-978, and Asp-980.

It is found in the cell projection. The protein resides in the cilium. The protein localises to the cytoplasm. It localises to the cytoskeleton. Its subcellular location is the cilium axoneme. Functionally, polyglycylase which modifies tubulin, generating side chains of glycine on the gamma-carboxyl groups of specific glutamate residues within the C-terminal tail of tubulin. Polyglycylates tubulin, with a preference for alpha-tubulin toward beta-tubulin. In Tetrahymena thermophila (strain SB210), this protein is Tubulin glycylase 3B (TTLL3B).